Here is a 197-residue protein sequence, read N- to C-terminus: MSDDTKKQDTAADAEVEKEMEGVPEHLRDDRGSEEDASDDLSAALESLKSDLEAAKQETLYAKAETQNVRRRMEKDIQDARTYAATGFARDILSIADNLARAIDAIPQELREDEKFKGLVAGIEATQRELDKVFAQHGVSRIAAMGLPLDPNQHQAMMEVPTDEVEPGTIVQEMQAGYMIRDRLLRPSMVGVAKKPD.

Residues 1–31 (MSDDTKKQDTAADAEVEKEMEGVPEHLRDDR) show a composition bias toward basic and acidic residues. Residues 1–48 (MSDDTKKQDTAADAEVEKEMEGVPEHLRDDRGSEEDASDDLSAALESL) form a disordered region.

The protein belongs to the GrpE family. Homodimer.

Its subcellular location is the cytoplasm. Its function is as follows. Participates actively in the response to hyperosmotic and heat shock by preventing the aggregation of stress-denatured proteins, in association with DnaK and GrpE. It is the nucleotide exchange factor for DnaK and may function as a thermosensor. Unfolded proteins bind initially to DnaJ; upon interaction with the DnaJ-bound protein, DnaK hydrolyzes its bound ATP, resulting in the formation of a stable complex. GrpE releases ADP from DnaK; ATP binding to DnaK triggers the release of the substrate protein, thus completing the reaction cycle. Several rounds of ATP-dependent interactions between DnaJ, DnaK and GrpE are required for fully efficient folding. The sequence is that of Protein GrpE from Erythrobacter litoralis (strain HTCC2594).